The chain runs to 38 residues: Large ribosomal subunit protein bL36 (38 aa).

Belongs to the bacterial ribosomal protein bL36 family.

The polypeptide is Large ribosomal subunit protein bL36 (Flavobacterium johnsoniae (strain ATCC 17061 / DSM 2064 / JCM 8514 / BCRC 14874 / CCUG 350202 / NBRC 14942 / NCIMB 11054 / UW101) (Cytophaga johnsonae)).